The primary structure comprises 187 residues: Elongation factor P (187 aa).

The protein belongs to the elongation factor P family.

It localises to the cytoplasm. The protein operates within protein biosynthesis; polypeptide chain elongation. Its function is as follows. Involved in peptide bond synthesis. Stimulates efficient translation and peptide-bond synthesis on native or reconstituted 70S ribosomes in vitro. Probably functions indirectly by altering the affinity of the ribosome for aminoacyl-tRNA, thus increasing their reactivity as acceptors for peptidyl transferase. In Gloeobacter violaceus (strain ATCC 29082 / PCC 7421), this protein is Elongation factor P.